Reading from the N-terminus, the 410-residue chain is Transforming growth factor beta-3 proprotein (410 aa).

Positions 1–23 are cleaved as a signal peptide; the sequence is MHLQRALVVLALLNLATISLSLS. Asn-72, Asn-133, and Asn-140 each carry an N-linked (GlcNAc...) asparagine glycan. The Cell attachment site signature appears at 259-261; sequence RGD. At Gln-291 the chain carries N5-methylglutamine. Disulfide bonds link Cys-305-Cys-314, Cys-313-Cys-376, Cys-342-Cys-407, and Cys-346-Cys-409.

This sequence belongs to the TGF-beta family. Interacts with ASPN. Latency-associated peptide: Homodimer; disulfide-linked. Latency-associated peptide: Interacts with Transforming growth factor beta-3 (TGF-beta-3) chain; interaction is non-covalent and maintains (TGF-beta-3) in a latent state. Latency-associated peptide: Interacts with LRRC32/GARP; leading to regulate activation of TGF-beta-3 and promote epithelial fusion during palate development. Latency-associated peptide: Interacts (via cell attachment site) with integrins, leading to release of the active TGF-beta-3. Transforming growth factor beta-3: Homodimer; disulfide-linked. Transforming growth factor beta-3: Interacts with TGF-beta receptors (TGFBR1 and TGFBR2), leading to signal transduction. Post-translationally, transforming growth factor beta-3 proprotein: The precursor proprotein is cleaved in the Golgi apparatus to form Transforming growth factor beta-3 (TGF-beta-3) and Latency-associated peptide (LAP) chains, which remain non-covalently linked, rendering TGF-beta-3 inactive. Methylated at Gln-291 by N6AMT1. As to expression, expressed in mammary glands with a slight increase in expression prior to lactation and again increasing at the onset of involution, expression peaks at day 3 of involution.

Its subcellular location is the secreted. The protein resides in the extracellular space. The protein localises to the extracellular matrix. Transforming growth factor beta-3 proprotein: Precursor of the Latency-associated peptide (LAP) and Transforming growth factor beta-3 (TGF-beta-3) chains, which constitute the regulatory and active subunit of TGF-beta-3, respectively. Its function is as follows. Required to maintain the Transforming growth factor beta-3 (TGF-beta-3) chain in a latent state during storage in extracellular matrix. Associates non-covalently with TGF-beta-3 and regulates its activation via interaction with 'milieu molecules', such as LTBP1 and LRRC32/GARP, that control activation of TGF-beta-3. Interaction with integrins results in distortion of the Latency-associated peptide chain and subsequent release of the active TGF-beta-3. Functionally, transforming growth factor beta-3: Multifunctional protein that regulates embryogenesis and cell differentiation and is required in various processes such as secondary palate development. Activation into mature form follows different steps: following cleavage of the proprotein in the Golgi apparatus, Latency-associated peptide (LAP) and Transforming growth factor beta-3 (TGF-beta-3) chains remain non-covalently linked rendering TGF-beta-3 inactive during storage in extracellular matrix. At the same time, LAP chain interacts with 'milieu molecules', such as LTBP1 and LRRC32/GARP that control activation of TGF-beta-3 and maintain it in a latent state during storage in extracellular milieus. TGF-beta-3 is released from LAP by integrins: integrin-binding results in distortion of the LAP chain and subsequent release of the active TGF-beta-3. Once activated following release of LAP, TGF-beta-3 acts by binding to TGF-beta receptors (TGFBR1 and TGFBR2), which transduce signal. In Mus musculus (Mouse), this protein is Transforming growth factor beta-3 proprotein.